The sequence spans 398 residues: Peptidyl-prolyl cis-trans isomerase D (398 aa).

The region spanning Phe-21 to Glu-185 is the PPIase cyclophilin-type domain. 3 TPR repeats span residues Gly-229–His-262, Thr-282–Glu-323, and Ala-335–Asp-368.

The protein belongs to the cyclophilin-type PPIase family. PPIase D subfamily.

It is found in the cytoplasm. The enzyme catalyses [protein]-peptidylproline (omega=180) = [protein]-peptidylproline (omega=0). Its function is as follows. PPIases accelerate the folding of proteins. It catalyzes the cis-trans isomerization of proline imidic peptide bonds in oligopeptides. In Mycosarcoma maydis (Corn smut fungus), this protein is Peptidyl-prolyl cis-trans isomerase D (CPR6).